The sequence spans 144 residues: MFLNTLRPGEGSKHAPKRVGRGIGSGLGKTGGRGHKGLKSRSGGSVKPGFEGGQMPLQRRLPKFGFTSRQAKYVAEVRLNELATVNAEVVDLAALKSADILGHQIKTARVILSGSIDKAITVRGLKVTKGARAAIEAAGGKVEE.

A disordered region spans residues 1–57 (MFLNTLRPGEGSKHAPKRVGRGIGSGLGKTGGRGHKGLKSRSGGSVKPGFEGGQMPL). Positions 21–31 (RGIGSGLGKTG) are enriched in gly residues.

The protein belongs to the universal ribosomal protein uL15 family. Part of the 50S ribosomal subunit.

Binds to the 23S rRNA. The chain is Large ribosomal subunit protein uL15 from Marinomonas sp. (strain MWYL1).